We begin with the raw amino-acid sequence, 606 residues long: Sulfite reductase [NADPH] flavoprotein alpha-component (606 aa).

The Flavodoxin-like domain maps to 64 to 202; the sequence is VTLISASQTG…QAQQWRQQVV (139 aa). FMN contacts are provided by residues 70–75, 117–120, and 153–162; these read SQTGNA, STQG, and LGDTSYEHFC. Low complexity predominate over residues 212–234; the sequence is QSTAPTQSTTPAAAAITSGGTTT. Residues 212 to 235 are disordered; that stretch reads QSTAPTQSTTPAAAAITSGGTTTV. One can recognise an FAD-binding FR-type domain in the interval 241-455; it reads TAPLTAQLSV…IEHNDNFRLP (215 aa). Residues T329, K363, 393–396, 411–413, Y417, and 426–429 each bind FAD; these read RLYS, TVG, and GGAS. Residues 526–527, 532–536, and D568 contribute to the NADP(+) site; these read SR and KIYVQ. Y606 contributes to the FAD binding site.

This sequence belongs to the NADPH-dependent sulphite reductase flavoprotein subunit CysJ family. In the N-terminal section; belongs to the flavodoxin family. It in the C-terminal section; belongs to the flavoprotein pyridine nucleotide cytochrome reductase family. As to quaternary structure, alpha(8)-beta(8). The alpha component is a flavoprotein, the beta component is a hemoprotein. FAD is required as a cofactor. It depends on FMN as a cofactor.

It carries out the reaction hydrogen sulfide + 3 NADP(+) + 3 H2O = sulfite + 3 NADPH + 4 H(+). The protein operates within sulfur metabolism; hydrogen sulfide biosynthesis; hydrogen sulfide from sulfite (NADPH route): step 1/1. Its function is as follows. Component of the sulfite reductase complex that catalyzes the 6-electron reduction of sulfite to sulfide. This is one of several activities required for the biosynthesis of L-cysteine from sulfate. The flavoprotein component catalyzes the electron flow from NADPH -&gt; FAD -&gt; FMN to the hemoprotein component. In Yersinia pestis bv. Antiqua (strain Antiqua), this protein is Sulfite reductase [NADPH] flavoprotein alpha-component.